We begin with the raw amino-acid sequence, 367 residues long: Peptide chain release factor 2 (367 aa).

At Gln254 the chain carries N5-methylglutamine.

The protein belongs to the prokaryotic/mitochondrial release factor family. In terms of processing, methylated by PrmC. Methylation increases the termination efficiency of RF2.

The protein resides in the cytoplasm. Functionally, peptide chain release factor 2 directs the termination of translation in response to the peptide chain termination codons UGA and UAA. The chain is Peptide chain release factor 2 from Janthinobacterium sp. (strain Marseille) (Minibacterium massiliensis).